The sequence spans 122 residues: Large ribosomal subunit protein uL14 (122 aa).

It belongs to the universal ribosomal protein uL14 family. As to quaternary structure, part of the 50S ribosomal subunit. Forms a cluster with proteins L3 and L19. In the 70S ribosome, L14 and L19 interact and together make contacts with the 16S rRNA in bridges B5 and B8.

In terms of biological role, binds to 23S rRNA. Forms part of two intersubunit bridges in the 70S ribosome. This Albidiferax ferrireducens (strain ATCC BAA-621 / DSM 15236 / T118) (Rhodoferax ferrireducens) protein is Large ribosomal subunit protein uL14.